Here is a 158-residue protein sequence, read N- to C-terminus: Style cell-cycle inhibitor 1-B (158 aa).

2 stretches are compositionally biased toward basic and acidic residues: residues 1-11 and 22-47; these read MGSDKKTTEEK and PRDE…DKSK. Residues 1-88 form a disordered region; the sequence is MGSDKKTTEE…DKSKNKFEEL (88 aa). Basic residues-rich tracts occupy residues 48–58 and 67–81; these read KEKHKSHKSKC and GEKH…KDKS.

In terms of tissue distribution, specifically expressed in flowers pistils, especially in stigmas and styles. Barely detected in roots, stems, leaves, sepals, petals and stamen.

Its subcellular location is the nucleus. In terms of biological role, component of the auxin signaling transduction pathway that regulates cell proliferation and differentiation during flowers stigmas and styles development. Involved in the regulation of auxin-related genes. This chain is Style cell-cycle inhibitor 1-B, found in Nicotiana tabacum (Common tobacco).